We begin with the raw amino-acid sequence, 46 residues long: Peroxidase 1 (46 aa).

Belongs to the peroxidase family. Classical plant (class III) peroxidase subfamily. It depends on heme b as a cofactor. Ca(2+) is required as a cofactor.

It is found in the secreted. It catalyses the reaction 2 a phenolic donor + H2O2 = 2 a phenolic radical donor + 2 H2O. In terms of biological role, removal of H(2)O(2), oxidation of toxic reductants, biosynthesis and degradation of lignin, suberization, auxin catabolism, response to environmental stresses such as wounding, pathogen attack and oxidative stress. These functions might be dependent on each isozyme/isoform in each plant tissue. This is Peroxidase 1 from Catharanthus roseus (Madagascar periwinkle).